A 215-amino-acid polypeptide reads, in one-letter code: MGKMNHQDELPLAKVSEVDEAKRQWLQGMRHPVDTVTEPEPAEILAEFIRQHSAAGQLVARAVFLSPPYLVAEEELSVLLESIKQNGDYADIACLTGSKDDYYYSTQAMSENYAAMSLQVVEQDICRAIAHAVRFECQTYPRPYKVAMLMQAPYYFQEAQIEAAIAAMDVAPEYADIRQVESSTAVLYLFSERFMTYGKAYGLCEWFEVEQFQNP.

This is an uncharacterized protein from Escherichia coli (strain K12).